The chain runs to 266 residues: Hydroxyethylthiazole kinase (266 aa).

Methionine 46 serves as a coordination point for substrate. The ATP site is built by lysine 122 and threonine 166. Position 193 (glycine 193) interacts with substrate.

The protein belongs to the Thz kinase family. It depends on Mg(2+) as a cofactor.

It carries out the reaction 5-(2-hydroxyethyl)-4-methylthiazole + ATP = 4-methyl-5-(2-phosphooxyethyl)-thiazole + ADP + H(+). The protein operates within cofactor biosynthesis; thiamine diphosphate biosynthesis; 4-methyl-5-(2-phosphoethyl)-thiazole from 5-(2-hydroxyethyl)-4-methylthiazole: step 1/1. In terms of biological role, catalyzes the phosphorylation of the hydroxyl group of 4-methyl-5-beta-hydroxyethylthiazole (THZ). The protein is Hydroxyethylthiazole kinase of Caldivirga maquilingensis (strain ATCC 700844 / DSM 13496 / JCM 10307 / IC-167).